A 976-amino-acid chain; its full sequence is Receptor-like protein 14 (976 aa).

The first 26 residues, 1–26 (MERKVFSGQNLIWVMLLLVQLRGYKC), serve as a signal peptide directing secretion. Residues 27–928 (CIEKERKALL…DDDDEAAIDM (902 aa)) lie on the Extracellular side of the membrane. N-linked (GlcNAc...) asparagine glycosylation is found at Asn-60, Asn-75, Asn-98, Asn-112, Asn-151, Asn-185, and Asn-200. LRR repeat units lie at residues 105–127 (FEELRSLNLSGEIYNEFNGLFDD), 137–160 (LRNLEILDLSSNSFNNSIFPFLNA), 162–185 (TSLTTLFIQSNYIGGPLPIKELKN), 186–209 (LTKLELLDLSRSGYNGSIPEFTHL), 210–233 (EKLKALDLSANDFSSLVELQELKV), 234–258 (LTNLEVLGLAWNHLDGPIPKEVFCE), 260–283 (KNLRQLDLRGNYFEGQLPVCLGNL), 284–306 (NKLRVLDLSSNQLSGNLPASFNS), 308–331 (ESLEYLSLSDNNFEGFFSLNPLAN), 333–358 (TKLKVFRLSSTSEMLQVETESNWLPK), 359–381 (FQLTVAALPFCSLGKIPNFLVYQ), 382–405 (TNLRLVDLSSNRLSGDIPTWLLEN), 407–428 (PELKVLQLKNNSFTIFQIPTIV), 429–452 (HKLQVLDFSANDITGVLPDNIGHV), 454–477 (PRLLHMNGSHNGFQGNLPSSMGEM), 478–501 (NDISFLDLSYNNFSGELPRSLLTG), and 503–528 (FSLITLQLSHNSFSGPILPIQTRLTS). Residue Asn-331 is glycosylated (N-linked (GlcNAc...) asparagine). Asn-416 carries an N-linked (GlcNAc...) asparagine glycan. 2 N-linked (GlcNAc...) asparagine glycosylation sites follow: Asn-460 and Asn-489. An LRR 18; degenerate repeat occupies 530–549 (IVLRMHNNLFTGEIGVGLRT). LRR repeat units lie at residues 550–573 (LVNLSIFDASNNRLTGLISSSIPP), 575–599 (SSHLIMLLLSNNLLEGTLPPSLLAI), 600–623 (HHLNFLDLSGNLLSGDLPSSVVNS), 625–645 (YGIKIFLHNNSFTGPLPVTLL), 646–669 (ENAYILDLRNNKLSGSIPQFVNTG), 671–692 (MITLLLRGNNLTGSIPRKLCDL), 693–715 (TSIRLLDLSDNKLNGVIPPCLNH), 782–805 (LDYMYGLDLSSNELSGVIPAELGD), 806–829 (LSKLRALNLSRNLLSSSIPANFSK), 831–854 (KDIESLDLSYNMLQGNIPHQLTNL), and 856–879 (SLAVFNVSFNNLSGIIPQGGQFNT). Residue Asn-552 is glycosylated (N-linked (GlcNAc...) asparagine). N-linked (GlcNAc...) asparagine glycosylation occurs at Asn-633. An N-linked (GlcNAc...) asparagine glycan is attached at Asn-680. Asn-813, Asn-826, Asn-853, Asn-861, and Asn-866 each carry an N-linked (GlcNAc...) asparagine glycan. Residues 897–922 (DRSCEGKKNTKEADNGGEEEEEDDDD) are disordered. Over residues 898-910 (RSCEGKKNTKEAD) the composition is skewed to basic and acidic residues. The segment covering 911 to 922 (NGGEEEEEDDDD) has biased composition (acidic residues). Residues 929-949 (VVLYWTTGSTYAIALIGILVL) form a helical membrane-spanning segment. Over 950 to 976 (MCFDCPWRRTWLCIVDAFIASGKSMFS) the chain is Cytoplasmic.

The protein belongs to the RLP family.

The protein localises to the cell membrane. This chain is Receptor-like protein 14, found in Arabidopsis thaliana (Mouse-ear cress).